Consider the following 143-residue polypeptide: uncharacterized protein (143 aa).

The HTH marR-type domain maps to 11 to 139 (EYELTTFIRR…FGELLQRMNK (129 aa)). The segment at residues 53–76 (VKELAESFKLDISTLSRQAAALEA) is a DNA-binding region (H-T-H motif).

This is an uncharacterized protein from Bacillus subtilis (strain 168).